The primary structure comprises 336 residues: Protein-arginine kinase (336 aa).

One can recognise a Phosphagen kinase C-terminal domain in the interval 22 to 245 (IVMSSRIRLA…QQIINEEMQI (224 aa)). ATP-binding positions include 25–29 (SSRIR), His83, Arg116, 167–171 (RASVM), and 198–203 (RGIYGE).

The protein belongs to the ATP:guanido phosphotransferase family.

It catalyses the reaction L-arginyl-[protein] + ATP = N(omega)-phospho-L-arginyl-[protein] + ADP + H(+). In terms of biological role, catalyzes the specific phosphorylation of arginine residues in proteins. The protein is Protein-arginine kinase of Staphylococcus saprophyticus subsp. saprophyticus (strain ATCC 15305 / DSM 20229 / NCIMB 8711 / NCTC 7292 / S-41).